The chain runs to 200 residues: ATP synthase subunit s, mitochondrial (200 aa).

The transit peptide at 1–25 (MMLFGKISQQLCGLKKLPWSRDSRY) directs the protein to the mitochondrion. The tract at residues 1–61 (MMLFGKISQQ…SEWLLRCGAM (61 aa)) is N-terminal domain. G59 contributes to the Mg(2+) binding site. LRR repeat units lie at residues 62-87 (VRYH…KYKI), 88-116 (QAID…KIRL), 117-141 (CKCH…KSML), and 142-173 (EMEI…LSDL). T93 provides a ligand contact to Mg(2+).

Belongs to the ATP synthase subunit s family. Homotetramer. Associates with ATP synthase.

It is found in the mitochondrion. The protein localises to the mitochondrion inner membrane. In terms of biological role, involved in regulation of mitochondrial membrane ATP synthase. Necessary for H(+) conduction of ATP synthase. Facilitates energy-driven catalysis of ATP synthesis by blocking a proton leak through an alternative proton exit pathway. This Bos taurus (Bovine) protein is ATP synthase subunit s, mitochondrial (DMAC2L).